A 355-amino-acid chain; its full sequence is Enhancer of mRNA-decapping protein 1 (355 aa).

3 disordered regions span residues 1–146 (MSSD…VDGM), 210–230 (MSQP…SQPM), and 301–330 (NSTA…KSSQ). The segment covering 39–49 (AQKQQLPNGEQ) has biased composition (polar residues). Positions 57–67 (KQSRKRGSGRQ) are enriched in basic residues. The span at 91-110 (SIPSGSAGSESAQKETSAGQ) shows a compositional bias: polar residues. Residues 123-142 (VPAGGPAGKSSSEPASASSA) show a composition bias toward low complexity.

This sequence belongs to the EDC family.

It localises to the cytoplasm. Functionally, mRNA-binding protein which stimulates mRNA decapping. The protein is Enhancer of mRNA-decapping protein 1 (EDC1) of Eremothecium gossypii (strain ATCC 10895 / CBS 109.51 / FGSC 9923 / NRRL Y-1056) (Yeast).